Reading from the N-terminus, the 230-residue chain is MPGKPVNLASPNERKLNFWERLYLPAVVQGLAYTWRKMRSPRYTFQYPDELWYPPDSYRGRPVLVEENGRPRCVACGLCARACPPLAISMQAKEVDDVKEREPAWFEINMLRCIYCGYCEEVCPEEAIVMSKEYDLTFQSRDEAIFGLEKLLVPAERLKDRLEWLDRYKDPQYGQHWEFRKENNLHSLKDRPFLKWLLEEEGMEELKSTHLRPEEPVAAERSWGGVRAEG.

4Fe-4S ferredoxin-type domains follow at residues 60–93 and 104–133; these read GRPVLVEENGRPRCVACGLCARACPPLAISMQAK and AWFEINMLRCIYCGYCEEVCPEEAIVMSKE. [4Fe-4S] cluster contacts are provided by Cys-73, Cys-76, Cys-79, Cys-83, Cys-113, Cys-116, Cys-119, and Cys-123.

This sequence belongs to the complex I 23 kDa subunit family. As to quaternary structure, NDH-1 is composed of 14 different subunits. Subunits Nqo7-14 constitute the membrane sector of the complex. Requires [4Fe-4S] cluster as cofactor.

It localises to the cell inner membrane. It carries out the reaction a quinone + NADH + 5 H(+)(in) = a quinol + NAD(+) + 4 H(+)(out). In terms of biological role, NDH-1 shuttles electrons from NADH, via FMN and iron-sulfur (Fe-S) centers, to quinones in the respiratory chain. The immediate electron acceptor for the enzyme in this species is believed to be menaquinone. Couples the redox reaction to proton translocation (for every two electrons transferred, four hydrogen ions are translocated across the cytoplasmic membrane), and thus conserves the redox energy in a proton gradient. In Rhodothermus marinus (Rhodothermus obamensis), this protein is NADH-quinone oxidoreductase subunit 9 (nqo9).